The sequence spans 341 residues: Aspartate carbamoyltransferase catalytic subunit (341 aa).

Positions 89 and 90 each coordinate carbamoyl phosphate. Lysine 117 is an L-aspartate binding site. Arginine 139, histidine 169, and glutamine 172 together coordinate carbamoyl phosphate. Arginine 202 and arginine 257 together coordinate L-aspartate. Carbamoyl phosphate-binding residues include glycine 298 and proline 299.

The protein belongs to the aspartate/ornithine carbamoyltransferase superfamily. ATCase family. In terms of assembly, heterododecamer (2C3:3R2) of six catalytic PyrB chains organized as two trimers (C3), and six regulatory PyrI chains organized as three dimers (R2).

It carries out the reaction carbamoyl phosphate + L-aspartate = N-carbamoyl-L-aspartate + phosphate + H(+). The protein operates within pyrimidine metabolism; UMP biosynthesis via de novo pathway; (S)-dihydroorotate from bicarbonate: step 2/3. Functionally, catalyzes the condensation of carbamoyl phosphate and aspartate to form carbamoyl aspartate and inorganic phosphate, the committed step in the de novo pyrimidine nucleotide biosynthesis pathway. The chain is Aspartate carbamoyltransferase catalytic subunit from Paraburkholderia xenovorans (strain LB400).